The primary structure comprises 185 residues: Large ribosomal subunit protein uL5 (185 aa).

The protein belongs to the universal ribosomal protein uL5 family. As to quaternary structure, part of the 50S ribosomal subunit; part of the 5S rRNA/L5/L18/L25 subcomplex. Contacts the 5S rRNA and the P site tRNA. Forms a bridge to the 30S subunit in the 70S ribosome.

Functionally, this is one of the proteins that bind and probably mediate the attachment of the 5S RNA into the large ribosomal subunit, where it forms part of the central protuberance. In the 70S ribosome it contacts protein S13 of the 30S subunit (bridge B1b), connecting the 2 subunits; this bridge is implicated in subunit movement. Contacts the P site tRNA; the 5S rRNA and some of its associated proteins might help stabilize positioning of ribosome-bound tRNAs. The chain is Large ribosomal subunit protein uL5 from Bradyrhizobium diazoefficiens (strain JCM 10833 / BCRC 13528 / IAM 13628 / NBRC 14792 / USDA 110).